A 171-amino-acid polypeptide reads, in one-letter code: ATP synthase subunit b (171 aa).

A helical transmembrane segment spans residues 26 to 46 (INLVLVIALLVYFLKGFLGGI).

The protein belongs to the ATPase B chain family. F-type ATPases have 2 components, F(1) - the catalytic core - and F(0) - the membrane proton channel. F(1) has five subunits: alpha(3), beta(3), gamma(1), delta(1), epsilon(1). F(0) has four main subunits: a(1), b(1), b'(1) and c(10-14). The alpha and beta chains form an alternating ring which encloses part of the gamma chain. F(1) is attached to F(0) by a central stalk formed by the gamma and epsilon chains, while a peripheral stalk is formed by the delta, b and b' chains.

It localises to the cellular thylakoid membrane. In terms of biological role, f(1)F(0) ATP synthase produces ATP from ADP in the presence of a proton or sodium gradient. F-type ATPases consist of two structural domains, F(1) containing the extramembraneous catalytic core and F(0) containing the membrane proton channel, linked together by a central stalk and a peripheral stalk. During catalysis, ATP synthesis in the catalytic domain of F(1) is coupled via a rotary mechanism of the central stalk subunits to proton translocation. Functionally, component of the F(0) channel, it forms part of the peripheral stalk, linking F(1) to F(0). In Synechococcus sp. (strain RCC307), this protein is ATP synthase subunit b.